Here is a 931-residue protein sequence, read N- to C-terminus: Isoleucine--tRNA ligase (931 aa).

The 'HIGH' region motif lies at 58–68; sequence PYANGHLHCGH. Residue Glu-559 coordinates L-isoleucyl-5'-AMP. The 'KMSKS' region motif lies at 600–604; sequence KLSKS. Lys-603 is a binding site for ATP. Positions 894, 897, 914, and 917 each coordinate Zn(2+).

Belongs to the class-I aminoacyl-tRNA synthetase family. IleS type 1 subfamily. Monomer. It depends on Zn(2+) as a cofactor.

The protein resides in the cytoplasm. The catalysed reaction is tRNA(Ile) + L-isoleucine + ATP = L-isoleucyl-tRNA(Ile) + AMP + diphosphate. Functionally, catalyzes the attachment of isoleucine to tRNA(Ile). As IleRS can inadvertently accommodate and process structurally similar amino acids such as valine, to avoid such errors it has two additional distinct tRNA(Ile)-dependent editing activities. One activity is designated as 'pretransfer' editing and involves the hydrolysis of activated Val-AMP. The other activity is designated 'posttransfer' editing and involves deacylation of mischarged Val-tRNA(Ile). The polypeptide is Isoleucine--tRNA ligase (Legionella pneumophila (strain Corby)).